The following is a 115-amino-acid chain: Tyrosine-protein phosphatase 18 (115 aa).

The region spanning 1–115 (WLMIVEQKCR…ETGSDAPMVV (115 aa)) is the Tyrosine-protein phosphatase domain. Aspartate 83 provides a ligand contact to substrate.

It belongs to the protein-tyrosine phosphatase family.

The catalysed reaction is O-phospho-L-tyrosyl-[protein] + H2O = L-tyrosyl-[protein] + phosphate. The protein is Tyrosine-protein phosphatase 18 (STY-18) of Styela plicata (Wrinkled sea squirt).